We begin with the raw amino-acid sequence, 405 residues long: Replication factor C large subunit (405 aa).

Position 47 to 54 (47 to 54 (GPPGVGKT)) interacts with ATP.

Belongs to the activator 1 small subunits family. RfcL subfamily. In terms of assembly, heteromultimer composed of small subunits (RfcS) and large subunits (RfcL).

Part of the RFC clamp loader complex which loads the PCNA sliding clamp onto DNA. The protein is Replication factor C large subunit of Saccharolobus islandicus (strain L.S.2.15 / Lassen #1) (Sulfolobus islandicus).